Consider the following 344-residue polypeptide: Cyclin-G2 (344 aa).

A compositionally biased stretch (acidic residues) spans 301–313 (ESESEDSCEDMSC). The segment at 301 to 320 (ESESEDSCEDMSCGEESLSS) is disordered.

It belongs to the cyclin family. Cyclin G subfamily. High levels in cerebellum, thymus, spleen and prostate. Low levels in skeletal muscle.

Its subcellular location is the cytoplasm. May play a role in growth regulation and in negative regulation of cell cycle progression. The polypeptide is Cyclin-G2 (CCNG2) (Homo sapiens (Human)).